The sequence spans 349 residues: UDP-3-O-acylglucosamine N-acyltransferase (349 aa).

The Proton acceptor role is filled by His-248.

Belongs to the transferase hexapeptide repeat family. LpxD subfamily. Homotrimer.

The enzyme catalyses a UDP-3-O-[(3R)-3-hydroxyacyl]-alpha-D-glucosamine + a (3R)-hydroxyacyl-[ACP] = a UDP-2-N,3-O-bis[(3R)-3-hydroxyacyl]-alpha-D-glucosamine + holo-[ACP] + H(+). The protein operates within bacterial outer membrane biogenesis; LPS lipid A biosynthesis. Its function is as follows. Catalyzes the N-acylation of UDP-3-O-acylglucosamine using 3-hydroxyacyl-ACP as the acyl donor. Is involved in the biosynthesis of lipid A, a phosphorylated glycolipid that anchors the lipopolysaccharide to the outer membrane of the cell. This Colwellia psychrerythraea (strain 34H / ATCC BAA-681) (Vibrio psychroerythus) protein is UDP-3-O-acylglucosamine N-acyltransferase.